The chain runs to 101 residues: Small ribosomal subunit protein uS14 (101 aa).

The tract at residues 51-70 (LPRDSSPSRQRNRCSQTGRP) is disordered. Positions 52–68 (PRDSSPSRQRNRCSQTG) are enriched in polar residues.

Belongs to the universal ribosomal protein uS14 family. In terms of assembly, part of the 30S ribosomal subunit. Contacts proteins S3 and S10.

Binds 16S rRNA, required for the assembly of 30S particles and may also be responsible for determining the conformation of the 16S rRNA at the A site. This chain is Small ribosomal subunit protein uS14, found in Mannheimia succiniciproducens (strain KCTC 0769BP / MBEL55E).